The chain runs to 347 residues: Phosphate acyltransferase (347 aa).

Belongs to the PlsX family. As to quaternary structure, homodimer. Probably interacts with PlsY.

Its subcellular location is the cytoplasm. It carries out the reaction a fatty acyl-[ACP] + phosphate = an acyl phosphate + holo-[ACP]. It functions in the pathway lipid metabolism; phospholipid metabolism. Catalyzes the reversible formation of acyl-phosphate (acyl-PO(4)) from acyl-[acyl-carrier-protein] (acyl-ACP). This enzyme utilizes acyl-ACP as fatty acyl donor, but not acyl-CoA. The sequence is that of Phosphate acyltransferase from Lawsonia intracellularis (strain PHE/MN1-00).